An 813-amino-acid chain; its full sequence is Acyl-homoserine lactone acylase QuiP (813 aa).

An N-terminal signal peptide occupies residues 1 to 26; the sequence is MAAPAFPPFRLRFATAATLLGMLGLA. Ser-262 (nucleophile) is an active-site residue.

The protein belongs to the peptidase S45 family. As to quaternary structure, heterodimer of an alpha subunit and a beta subunit processed from the same precursor.

The protein resides in the periplasm. The enzyme catalyses an N-acyl-L-homoserine lactone + H2O = L-homoserine lactone + a carboxylate. Catalyzes the deacylation of acyl-homoserine lactone (AHL or acyl-HSL), releasing homoserine lactone (HSL) and the corresponding fatty acid. Possesses a specificity for the degradation of long-chain acyl-HSLs (side chains of seven or more carbons in length). In Pseudomonas putida (strain ATCC 47054 / DSM 6125 / CFBP 8728 / NCIMB 11950 / KT2440), this protein is Acyl-homoserine lactone acylase QuiP (quiP).